Consider the following 359-residue polypeptide: Fructose-bisphosphate aldolase 1 (359 aa).

D-glyceraldehyde 3-phosphate is bound at residue Ser-50. Asp-83 serves as the catalytic Proton donor. Positions 84, 105, 142, and 198 each coordinate Zn(2+). Dihydroxyacetone phosphate is bound at residue Gly-199. His-232 contributes to the Zn(2+) binding site. Dihydroxyacetone phosphate is bound by residues 233-235 (GSS) and 275-278 (NIDT).

The protein belongs to the class II fructose-bisphosphate aldolase family. As to quaternary structure, homodimer. It depends on Zn(2+) as a cofactor.

The catalysed reaction is beta-D-fructose 1,6-bisphosphate = D-glyceraldehyde 3-phosphate + dihydroxyacetone phosphate. The protein operates within carbohydrate biosynthesis; Calvin cycle. It functions in the pathway carbohydrate degradation; glycolysis; D-glyceraldehyde 3-phosphate and glycerone phosphate from D-glucose: step 4/4. Catalyzes the aldol condensation of dihydroxyacetone phosphate (DHAP or glycerone-phosphate) with glyceraldehyde 3-phosphate (G3P) to form fructose 1,6-bisphosphate (FBP) in gluconeogenesis and the reverse reaction in glycolysis. In Cereibacter sphaeroides (Rhodobacter sphaeroides), this protein is Fructose-bisphosphate aldolase 1 (cfxA).